An 82-amino-acid polypeptide reads, in one-letter code: Translation initiation factor IF-1, chloroplastic (82 aa).

One can recognise an S1-like domain in the interval 1–72 (MNKQNLIDVE…TKGRIIYRLR (72 aa)).

Belongs to the IF-1 family. In terms of assembly, component of the 30S ribosomal translation pre-initiation complex which assembles on the 30S ribosome in the order IF-2 and IF-3, IF-1 and N-formylmethionyl-tRNA(fMet); mRNA recruitment can occur at any time during PIC assembly.

The protein resides in the plastid. The protein localises to the chloroplast. Its function is as follows. One of the essential components for the initiation of protein synthesis. Stabilizes the binding of IF-2 and IF-3 on the 30S subunit to which N-formylmethionyl-tRNA(fMet) subsequently binds. Helps modulate mRNA selection, yielding the 30S pre-initiation complex (PIC). Upon addition of the 50S ribosomal subunit IF-1, IF-2 and IF-3 are released leaving the mature 70S translation initiation complex. The chain is Translation initiation factor IF-1, chloroplastic from Cycas taitungensis (Prince sago).